A 384-amino-acid polypeptide reads, in one-letter code: S-adenosylmethionine synthase (384 aa).

Histidine 15 is a binding site for ATP. Aspartate 17 contacts Mg(2+). Position 43 (glutamate 43) interacts with K(+). 2 residues coordinate L-methionine: glutamate 56 and glutamine 99. Residues 99–109 (QSPDINQGVDR) are flexible loop. ATP is bound by residues 164-166 (DAK), 230-231 (RF), aspartate 239, 245-246 (RK), alanine 262, and lysine 266. Position 239 (aspartate 239) interacts with L-methionine. Lysine 270 lines the L-methionine pocket.

This sequence belongs to the AdoMet synthase family. In terms of assembly, homotetramer; dimer of dimers. Mg(2+) serves as cofactor. K(+) is required as a cofactor.

It localises to the cytoplasm. The enzyme catalyses L-methionine + ATP + H2O = S-adenosyl-L-methionine + phosphate + diphosphate. The protein operates within amino-acid biosynthesis; S-adenosyl-L-methionine biosynthesis; S-adenosyl-L-methionine from L-methionine: step 1/1. Its function is as follows. Catalyzes the formation of S-adenosylmethionine (AdoMet) from methionine and ATP. The overall synthetic reaction is composed of two sequential steps, AdoMet formation and the subsequent tripolyphosphate hydrolysis which occurs prior to release of AdoMet from the enzyme. The polypeptide is S-adenosylmethionine synthase (Salmonella heidelberg (strain SL476)).